Consider the following 456-residue polypeptide: Probable glycine dehydrogenase (decarboxylating) subunit 1 (456 aa).

This sequence belongs to the GcvP family. N-terminal subunit subfamily. The glycine cleavage system is composed of four proteins: P, T, L and H. In this organism, the P 'protein' is a heterodimer of two subunits.

It carries out the reaction N(6)-[(R)-lipoyl]-L-lysyl-[glycine-cleavage complex H protein] + glycine + H(+) = N(6)-[(R)-S(8)-aminomethyldihydrolipoyl]-L-lysyl-[glycine-cleavage complex H protein] + CO2. The glycine cleavage system catalyzes the degradation of glycine. The P protein binds the alpha-amino group of glycine through its pyridoxal phosphate cofactor; CO(2) is released and the remaining methylamine moiety is then transferred to the lipoamide cofactor of the H protein. The chain is Probable glycine dehydrogenase (decarboxylating) subunit 1 from Legionella pneumophila (strain Corby).